The primary structure comprises 355 residues: Uroporphyrinogen decarboxylase (355 aa).

Residues 27 to 31 (RQAGR), aspartate 77, tyrosine 154, threonine 209, and histidine 328 each bind substrate.

It belongs to the uroporphyrinogen decarboxylase family. In terms of assembly, homodimer.

It localises to the cytoplasm. It catalyses the reaction uroporphyrinogen III + 4 H(+) = coproporphyrinogen III + 4 CO2. It functions in the pathway porphyrin-containing compound metabolism; protoporphyrin-IX biosynthesis; coproporphyrinogen-III from 5-aminolevulinate: step 4/4. Functionally, catalyzes the decarboxylation of four acetate groups of uroporphyrinogen-III to yield coproporphyrinogen-III. The polypeptide is Uroporphyrinogen decarboxylase (Aliivibrio fischeri (strain ATCC 700601 / ES114) (Vibrio fischeri)).